Consider the following 344-residue polypeptide: ATPase GET3 (344 aa).

26 to 33 provides a ligand contact to ATP; it reads KGGVGKTT. Asp57 is a catalytic residue. ATP is bound by residues Glu239 and Asn266. Residues Cys276 and Cys279 each coordinate Zn(2+).

It belongs to the arsA ATPase family. As to quaternary structure, homodimer. Component of the Golgi to ER traffic (GET) complex, which is composed of GET1, GET2 and GET3. Within the complex, GET1 and GET2 form a heterotetramer which is stabilized by phosphatidylinositol binding and which binds to the GET3 homodimer. Interacts with the chloride channel protein GEF1.

Its subcellular location is the cytoplasm. It localises to the endoplasmic reticulum. The protein localises to the golgi apparatus. ATPase required for the post-translational delivery of tail-anchored (TA) proteins to the endoplasmic reticulum. Recognizes and selectively binds the transmembrane domain of TA proteins in the cytosol. This complex then targets to the endoplasmic reticulum by membrane-bound receptors GET1 and GET2, where the tail-anchored protein is released for insertion. This process is regulated by ATP binding and hydrolysis. ATP binding drives the homodimer towards the closed dimer state, facilitating recognition of newly synthesized TA membrane proteins. ATP hydrolysis is required for insertion. Subsequently, the homodimer reverts towards the open dimer state, lowering its affinity for the GET1-GET2 receptor, and returning it to the cytosol to initiate a new round of targeting. Cooperates with the HDEL receptor ERD2 to mediate the ATP-dependent retrieval of resident ER proteins that contain a C-terminal H-D-E-L retention signal from the Golgi to the ER. Involved in low-level resistance to the oxyanions arsenite and arsenate, and in heat tolerance. The sequence is that of ATPase GET3 from Komagataella phaffii (strain GS115 / ATCC 20864) (Yeast).